The chain runs to 569 residues: Phospholipase B-like protein D (569 aa).

The signal sequence occupies residues 1–22; that stretch reads MIIFKNLLKLLIILLTIKLYFC. N-linked (GlcNAc...) asparagine glycans are attached at residues Asn93, Asn126, Asn181, Asn425, and Asn430.

The protein belongs to the phospholipase B-like family.

It is found in the secreted. Probable phospholipase. The sequence is that of Phospholipase B-like protein D (plbD) from Dictyostelium discoideum (Social amoeba).